Consider the following 142-residue polypeptide: Pro-vaccinia growth factor (142 aa).

The N-terminal stretch at 1–18 is a signal peptide; it reads MSMKYLMLLFAAMIIRSF. At 19–100 the chain is on the extracellular side; that stretch reads ADSGNAIETT…SENPNTTTSY (82 aa). Asn-34 carries an N-linked (GlcNAc...) asparagine; by host glycan. Residues 41–81 enclose the EGF-like domain; it reads AIRLCGPEGDGYCLHGDCIHARDIDGMYCRCSHGYTGIRCQ. Intrachain disulfides connect Cys-45–Cys-58, Cys-53–Cys-69, and Cys-71–Cys-80. Asn-95 carries an N-linked (GlcNAc...) asparagine; by host glycan. The chain crosses the membrane as a helical span at residues 101–121; sequence IPSPGIMLVLVGIIIIITCCL. Residues 122–142 are Cytoplasmic-facing; sequence LSVYRFTRRTNKLPLQDMVVP.

This sequence belongs to the orthopoxvirus OPG019 family. As to quaternary structure, vaccinia growth factor interacts with host EGFR and promotes EGFR dimerization.

It is found in the host membrane. Its subcellular location is the secreted. Stimulates cellular proliferation (hyperplasia)and mobility around infected cells to promote rapid and efficient spread of infection. This effect is beneficial for virus replication in vivo, because poxviruses replicate possibly better in proliferating cells than in quiescent cells. Acts by binding host EGFR, inducing its dimerization, autophosphorylation and leading to activation of several cellular pathways regulating cell proliferation or cell survival. The activation by host EGFR of mitogen activated protein kinases (MAPK) and extracellular-signal regulated kinases (ERK) are essential for the positive effect of vaccinia growth factor on poxvirus virulence in vivo. The chain is Pro-vaccinia growth factor (OPG019) from Vaccinia virus (strain Copenhagen) (VACV).